Here is a 555-residue protein sequence, read N- to C-terminus: Glutamate--tRNA ligase (555 aa).

Residues 100-110 (PNPSGPLHIGH) carry the 'HIGH' region motif.

The protein belongs to the class-I aminoacyl-tRNA synthetase family. Glutamate--tRNA ligase type 2 subfamily.

The protein resides in the cytoplasm. It carries out the reaction tRNA(Glu) + L-glutamate + ATP = L-glutamyl-tRNA(Glu) + AMP + diphosphate. In terms of biological role, catalyzes the attachment of glutamate to tRNA(Glu) in a two-step reaction: glutamate is first activated by ATP to form Glu-AMP and then transferred to the acceptor end of tRNA(Glu). The chain is Glutamate--tRNA ligase from Methanococcus maripaludis (strain C6 / ATCC BAA-1332).